The chain runs to 189 residues: NADH-quinone oxidoreductase subunit B (189 aa).

[4Fe-4S] cluster-binding residues include Cys-39, Cys-40, Cys-104, and Cys-135.

It belongs to the complex I 20 kDa subunit family. As to quaternary structure, NDH-1 is composed of 14 different subunits. Subunits NuoB, C, D, E, F, and G constitute the peripheral sector of the complex. The cofactor is [4Fe-4S] cluster.

Its subcellular location is the cell inner membrane. It carries out the reaction a quinone + NADH + 5 H(+)(in) = a quinol + NAD(+) + 4 H(+)(out). NDH-1 shuttles electrons from NADH, via FMN and iron-sulfur (Fe-S) centers, to quinones in the respiratory chain. The immediate electron acceptor for the enzyme in this species is believed to be a menaquinone. Couples the redox reaction to proton translocation (for every two electrons transferred, four hydrogen ions are translocated across the cytoplasmic membrane), and thus conserves the redox energy in a proton gradient. This chain is NADH-quinone oxidoreductase subunit B, found in Chlorobaculum parvum (strain DSM 263 / NCIMB 8327) (Chlorobium vibrioforme subsp. thiosulfatophilum).